The chain runs to 874 residues: Mannuronan C5-epimerase AlgE6 (874 aa).

PbH1 repeat units lie at residues 133–155, 157–179, 180–202, 204–226, 234–256, 257–279, 280–302, and 320–351; these read DRNV…DPHE, TINL…VADY, QIGG…NIVT, TNDF…VVQR, PENI…LVKM, SNNV…RVYG, AQGV…APEV, and TLNT…DFSS. Hemolysin-type calcium-binding repeat units lie at residues 383 to 394, 401 to 417, 419 to 435, 562 to 578, 580 to 596, 723 to 739, and 741 to 757; these read GTDGNDVLIGSD, GGAG…DDLL, GGAG…ADTF, GGGG…GDLL, and GGGG…NDLL. Positions 401 to 420 are disordered; the sequence is GGAGDDRLDGGAGDDLLDGG.

It belongs to the D-mannuronate C5-epimerase family. Ca(2+) serves as cofactor.

The protein resides in the secreted. It carries out the reaction [(1-&gt;4)-beta-D-mannuronosyl](n) = [alginate](n). It functions in the pathway glycan biosynthesis; alginate biosynthesis. Its activity is regulated as follows. Inhibited by zinc. Functionally, converts beta-D-mannuronic acid (M) to alpha-L-guluronic acid (G), producing a polymer with gel-forming capacity, required for the formation of the cyst coat. This Azotobacter vinelandii protein is Mannuronan C5-epimerase AlgE6.